A 446-amino-acid chain; its full sequence is MKFRSTALVKGFRQSAPYVNAHRDKTVVIMLGGEAIADPNFANIVNDIALLNSLGLRIVIVYGTRPQMRSLLKQTEHHAPFHKGIRITDEQTLELVKQIAGQLQLDITARLSMSLNNTPMAGAQINVISGNFVIAQPLGVDDGIDYCHSGRVRRIDTQGINRMLDQQSIVLLGPVASSVTGECFNLLSEDVATQLAIRLNADKLIGFCSEQGVLNEKGQILAELFPSEAEEILQRLEKELTPENGKLTGTMRFLKGAISACKAGVPRSHLISYKEDGALIQELFSFDGIGTQVVMASSEQVRDAEIDDIGGILDLIRPLEEEGILVRRSREQLEQEIAQFTIIEKDGLVIACAALYPFPEEGMAEMGCVAVHPDYRDGDRGVILLNRLRAKAKQYKLSQLFVLTTRSLHWFREQGFIEVDVSHLPMKKQKLYNFQRKSKILVLKGL.

Residues Glu299 to Leu431 enclose the N-acetyltransferase domain.

This sequence belongs to the acetyltransferase family. ArgA subfamily.

The protein resides in the cytoplasm. It carries out the reaction L-glutamate + acetyl-CoA = N-acetyl-L-glutamate + CoA + H(+). Its pathway is amino-acid biosynthesis; L-arginine biosynthesis; N(2)-acetyl-L-ornithine from L-glutamate: step 1/4. The chain is Amino-acid acetyltransferase from Aliivibrio fischeri (strain MJ11) (Vibrio fischeri).